The primary structure comprises 135 residues: Flagellar assembly factor FliW 1 (135 aa).

It belongs to the FliW family. As to quaternary structure, interacts with translational regulator CsrA and flagellin(s).

The protein resides in the cytoplasm. Acts as an anti-CsrA protein, binds CsrA and prevents it from repressing translation of its target genes, one of which is flagellin. Binds to flagellin and participates in the assembly of the flagellum. In Helicobacter pylori (strain HPAG1), this protein is Flagellar assembly factor FliW 1.